The primary structure comprises 507 residues: CWF19-like protein DRN1 (507 aa).

Residue S242 is modified to Phosphoserine.

Belongs to the CWF19 family. In terms of assembly, interacts with DBR1. Interacts with SYF1, a component of the NTC complex. Interacts with lariat-introns and lariat-intermediates.

Its subcellular location is the nucleus. It localises to the cytoplasm. Functionally, involved in branched RNA metabolism, modulating the turnover of lariat-intron pre-mRNAs by the lariat-debranching enzyme DBR1. Enhances the debranching activity of DBR1 in vitro. This is CWF19-like protein DRN1 (DRN1) from Saccharomyces cerevisiae (strain ATCC 204508 / S288c) (Baker's yeast).